Consider the following 1732-residue polypeptide: Serine/threonine-protein kinase MRCK alpha (1732 aa).

Positions 77-343 (FEILKVIGRG…IEDFKKHPFF (267 aa)) constitute a Protein kinase domain. ATP-binding positions include 83-91 (IGRGAFGEV) and lysine 106. Aspartate 201 acts as the Proton acceptor in catalysis. Serine 222 and serine 234 each carry phosphoserine; by autocatalysis. Threonine 240 is subject to Phosphothreonine; by autocatalysis. The AGC-kinase C-terminal domain maps to 344 to 414 (SGIDWDNIRN…TSSCVLSDRS (71 aa)). 2 coiled-coil regions span residues 437 to 820 (NNLA…WEAQ) and 880 to 943 (LELQ…SEKG). The disordered stretch occupies residues 968–1003 (ERSPSCTPASKGRRTVDSTPLSVHTPTLRKKGCPGS). A Phorbol-ester/DAG-type zinc finger spans residues 1012 to 1062 (THQFFVKSFTTPTKCHQCTSLMVGLIRQGCSCEVCGFSCHITCVNKAPTTC). The PH domain maps to 1082 to 1201 (GTAYEGHVRI…WVGVLSELHK (120 aa)). Phosphoserine is present on serine 1127. The CNH domain occupies 1227-1499 (IKTTQAAAII…RPLNNEGSLN (273 aa)). Serine 1545 is subject to Phosphoserine. The CRIB domain maps to 1571-1584 (ISNPTNFNHIAHMG). The tract at residues 1591-1732 (ILKDLPMNPR…ESTDRGSWDP (142 aa)) is disordered. A compositionally biased stretch (polar residues) spans 1604–1619 (SRTVFSGSVSIPSITK). Phosphoserine is present on residues serine 1611, serine 1613, serine 1629, serine 1651, serine 1664, serine 1669, and serine 1693. The segment covering 1625–1640 (GRSMSASSGLSARSSA) has biased composition (low complexity). Residues 1665 to 1674 (PSEGSLSSGG) are compositionally biased toward low complexity. Residues 1697–1707 (STASNSSNLSS) show a composition bias toward low complexity. Serine 1719 and serine 1721 each carry phosphoserine.

Belongs to the protein kinase superfamily. AGC Ser/Thr protein kinase family. DMPK subfamily. As to quaternary structure, homodimer and homotetramer via the coiled coil regions. Interacts tightly with GTP-bound but not GDP-bound CDC42. Forms a tripartite complex with MYO18A and LURAP1 with the latter acting as an adapter connecting CDC42BPA and MYO18A. LURAP1 binding results in activation of CDC42BPA by abolition of its negative autoregulation. Interacts with LURAP1. Interacts (via AGC-kinase C-terminal domain) with FAM89B/LRAP25 (via LRR repeat). Forms a tripartite complex with FAM89B/LRAP25 and LIMK1. The cofactor is Mg(2+). Proteolytically cleaved by caspases upon apoptosis induction. The cleavage at Asp-478 by CASP3 increases its kinase activity (in vitro). In terms of tissue distribution, abundant in the heart, brain, skeletal muscle, kidney, and pancreas, with little or no expression in the lung and liver.

The protein localises to the cytoplasm. Its subcellular location is the cell projection. It is found in the lamellipodium. It carries out the reaction L-seryl-[protein] + ATP = O-phospho-L-seryl-[protein] + ADP + H(+). It catalyses the reaction L-threonyl-[protein] + ATP = O-phospho-L-threonyl-[protein] + ADP + H(+). Its activity is regulated as follows. Maintained in an inactive, closed conformation by an interaction between the kinase domain and the negative autoregulatory C-terminal coiled-coil region. Agonist binding to the phorbol ester binding site disrupts this, releasing the kinase domain to allow N-terminus-mediated dimerization and kinase activation by transautophosphorylation. Inhibited by chelerythrine chloride. Serine/threonine-protein kinase which is an important downstream effector of CDC42 and plays a role in the regulation of cytoskeleton reorganization and cell migration. Regulates actin cytoskeletal reorganization via phosphorylation of PPP1R12C and MYL9/MLC2. In concert with MYO18A and LURAP1, is involved in modulating lamellar actomyosin retrograde flow that is crucial to cell protrusion and migration. Phosphorylates: PPP1R12A, LIMK1 and LIMK2. May play a role in TFRC-mediated iron uptake. In concert with FAM89B/LRAP25 mediates the targeting of LIMK1 to the lamellipodium resulting in its activation and subsequent phosphorylation of CFL1 which is important for lamellipodial F-actin regulation. Triggers the formation of an extrusion apical actin ring required for epithelial extrusion of apoptotic cells. This chain is Serine/threonine-protein kinase MRCK alpha, found in Homo sapiens (Human).